Consider the following 486-residue polypeptide: CUGBP Elav-like family member 4 (486 aa).

The segment at 1–298 (MYIKMATLAN…AAFAAAQMQQ (298 aa)) is sufficient for RNA-binding and MSE-dependent splicing activity. Polar residues predominate over residues 18-28 (LSTNGLGSSPG). Disordered stretches follow at residues 18 to 39 (LSTN…LSHS) and 121 to 149 (LPGM…QPPS). An RRM 1 domain is found at 54-135 (IKLFIGQIPR…RPIQVKPADS (82 aa)). A compositionally biased stretch (polar residues) spans 138–149 (RGGSSCLRQPPS). One can recognise an RRM 2 domain in the interval 152–232 (RKLFVGMLNK…SSLVVKFADT (81 aa)). The interval 239-258 (RRMQQMAGQMGMFNPMAIPF) is necessary for TNNT2 exon 5 inclusion. One can recognise an RRM 3 domain in the interval 404 to 479 (PQPPPMIPQQ…KRLKVQLKRP (76 aa)).

This sequence belongs to the CELF/BRUNOL family. In terms of tissue distribution, ubiquitous. Strongly expressed in the cerebellum, hippocampus, amygdala, temporal and frontal cortex and frontal lobes.

The protein resides in the nucleus. It is found in the cytoplasm. Functionally, RNA-binding protein implicated in the regulation of pre-mRNA alternative splicing. Mediates exon inclusion and/or exclusion in pre-mRNA that are subject to tissue-specific and developmentally regulated alternative splicing. Specifically activates exon 5 inclusion of cardiac isoforms of TNNT2 during heart remodeling at the juvenile to adult transition. Promotes exclusion of both the smooth muscle (SM) and non-muscle (NM) exons in actinin pre-mRNAs. Activates the splicing of MAPT/Tau exon 10. Binds to muscle-specific splicing enhancer (MSE) intronic sites flanking the alternative exon 5 of TNNT2 pre-mRNA. This chain is CUGBP Elav-like family member 4 (CELF4), found in Homo sapiens (Human).